We begin with the raw amino-acid sequence, 237 residues long: MFLTRTEYDRGVNTFSPEGRLFQVEYAIEAIKLGSTAIGVKTKEGVVLAVEKRITSPLLEPSSVEKIMEIDDHIGCAMSGLIADARTLVEHARVETQNHRFSYGEPMTVESTTQALCDLALRFGEGEEESMSRPFGVSLLIAGHDENGPSLYYTDPSGTFWQCNAKAIGSGSEGADSSLQEQFNKDITLQEAETIAVSILKQVMEEKVTPNNVDIAKVAPAYHLYTPQEVEAVISRL.

An N-acetylmethionine modification is found at methionine 1. Glycyl lysine isopeptide (Lys-Gly) (interchain with G-Cter in ubiquitin) cross-links involve residues lysine 43, lysine 66, and lysine 185.

This sequence belongs to the peptidase T1A family. In terms of assembly, component of the 20S core complex of the 26S proteasome. The 26S proteasome is composed of a core protease (CP), known as the 20S proteasome, capped at one or both ends by the 19S regulatory particle (RP/PA700). The 20S proteasome core is composed of 28 subunits that are arranged in four stacked rings, resulting in a barrel-shaped structure. The two end rings are each formed by seven alpha subunits, and the two central rings are each formed by seven beta subunits. The catalytic chamber with the active sites is on the inside of the barrel.

The protein resides in the cytoplasm. It is found in the nucleus. In terms of biological role, the proteasome is a multicatalytic proteinase complex which is characterized by its ability to cleave peptides with Arg, Phe, Tyr, Leu, and Glu adjacent to the leaving group at neutral or slightly basic pH. The proteasome has an ATP-dependent proteolytic activity. The chain is Proteasome subunit alpha type-5-B (PAE2) from Arabidopsis thaliana (Mouse-ear cress).